The chain runs to 439 residues: 26S proteasome regulatory subunit 6A (439 aa).

At methionine 1 the chain carries N-acetylmethionine. Serine 9 carries the phosphoserine modification. 227-234 (GPPGTGKT) serves as a coordination point for ATP. The residue at position 376 (serine 376) is a Phosphoserine.

The protein belongs to the AAA ATPase family. As to quaternary structure, component of the 19S proteasome regulatory particle complex. The 26S proteasome consists of a 20S core particle (CP) and two 19S regulatory subunits (RP). The regulatory particle is made of a lid composed of 9 subunits, a base containing 6 ATPases including PSMC3 and few additional components. Interacts with PAAF1.

It localises to the cytoplasm. It is found in the nucleus. Functionally, component of the 26S proteasome, a multiprotein complex involved in the ATP-dependent degradation of ubiquitinated proteins. This complex plays a key role in the maintenance of protein homeostasis by removing misfolded or damaged proteins, which could impair cellular functions, and by removing proteins whose functions are no longer required. Therefore, the proteasome participates in numerous cellular processes, including cell cycle progression, apoptosis, or DNA damage repair. PSMC3 belongs to the heterohexameric ring of AAA (ATPases associated with diverse cellular activities) proteins that unfolds ubiquitinated target proteins that are concurrently translocated into a proteolytic chamber and degraded into peptides. The polypeptide is 26S proteasome regulatory subunit 6A (Psmc3) (Rattus norvegicus (Rat)).